The chain runs to 186 residues: Dirigent protein 4 (186 aa).

The first 20 residues, 1-20 (MGKNLGLVVSFYLCITFALG), serve as a signal peptide directing secretion. Asn67, Asn126, Asn169, and Asn180 each carry an N-linked (GlcNAc...) asparagine glycan.

It belongs to the plant dirigent protein family. As to quaternary structure, homodimer.

It localises to the secreted. It is found in the extracellular space. Its subcellular location is the apoplast. Functionally, dirigent proteins impart stereoselectivity on the phenoxy radical-coupling reaction, yielding optically active lignans from two molecules of coniferyl alcohol in the biosynthesis of lignans, flavonolignans, and alkaloids and thus plays a central role in plant secondary metabolism. The chain is Dirigent protein 4 (DIR4) from Arabidopsis thaliana (Mouse-ear cress).